The chain runs to 244 residues: Protein DMP9 (244 aa).

Residues 1–56 (MEKTEESVGIRVYTATPPQKPSPSPPSRSPKPVLISSLPSLPSGAAAGGGRGRKRR) are disordered. Over residues 18-29 (PQKPSPSPPSRS) the composition is skewed to pro residues. The segment covering 30-45 (PKPVLISSLPSLPSGA) has biased composition (low complexity). The next 4 helical transmembrane spans lie at 71–91 (MLVN…LPSI), 99–119 (GINT…CFFF), 173–193 (LTVN…AIAF), and 213–233 (VMES…LVFP).

This sequence belongs to the plant DMP1 protein family. Restricted to flowers and pollen.

It is found in the endoplasmic reticulum membrane. It localises to the vacuole membrane. In terms of biological role, involved in membrane remodeling. In Arabidopsis thaliana (Mouse-ear cress), this protein is Protein DMP9.